Here is a 259-residue protein sequence, read N- to C-terminus: Tryptophan synthase alpha chain (259 aa).

Active-site proton acceptor residues include glutamate 35 and aspartate 46.

Belongs to the TrpA family. As to quaternary structure, tetramer of two alpha and two beta chains.

The catalysed reaction is (1S,2R)-1-C-(indol-3-yl)glycerol 3-phosphate + L-serine = D-glyceraldehyde 3-phosphate + L-tryptophan + H2O. It functions in the pathway amino-acid biosynthesis; L-tryptophan biosynthesis; L-tryptophan from chorismate: step 5/5. Its function is as follows. The alpha subunit is responsible for the aldol cleavage of indoleglycerol phosphate to indole and glyceraldehyde 3-phosphate. This chain is Tryptophan synthase alpha chain, found in Methanococcus maripaludis (strain C5 / ATCC BAA-1333).